Here is a 189-residue protein sequence, read N- to C-terminus: Frataxin-like protein, mitochondrial (189 aa).

The transit peptide at 1–50 (MNCARLHQRIPLRAMALTTTSYPALAPSHSFANASTSVMTASAMAVAHRA) directs the protein to the mitochondrion.

This sequence belongs to the frataxin family. As to quaternary structure, interacts with IscU; the interaction is direct.

The protein localises to the mitochondrion. It catalyses the reaction 4 Fe(2+) + O2 + 4 H(+) = 4 Fe(3+) + 2 H2O. In terms of biological role, iron-binding protein which binds 2 iron atoms per monomer. Probably, acts as an iron carrier for the biosynthesis of Fe-S clusters. Stimulates the cysteine desulphurase activity of IscS in the presence of IscU. This chain is Frataxin-like protein, mitochondrial, found in Leishmania donovani.